A 753-amino-acid chain; its full sequence is Polyribonucleotide nucleotidyltransferase (753 aa).

Residues Asp523 and Asp529 each contribute to the Mg(2+) site. Residues 589–648 (PRIISVRIPVDKIGAVIGPKGAMINQIQDDTGADITIEDDGTVLIGATDGASAEAARSAV) enclose the KH domain. In terms of domain architecture, S1 motif spans 660 to 732 (GERYLGTVVK…DRGKLSLSPV (73 aa)). The segment at 733 to 753 (GAESDAVAETADAIESSQTEA) is disordered.

The protein belongs to the polyribonucleotide nucleotidyltransferase family. It depends on Mg(2+) as a cofactor.

The protein resides in the cytoplasm. The catalysed reaction is RNA(n+1) + phosphate = RNA(n) + a ribonucleoside 5'-diphosphate. In terms of biological role, involved in mRNA degradation. Catalyzes the phosphorolysis of single-stranded polyribonucleotides processively in the 3'- to 5'-direction. In Micrococcus luteus (strain ATCC 4698 / DSM 20030 / JCM 1464 / CCM 169 / CCUG 5858 / IAM 1056 / NBRC 3333 / NCIMB 9278 / NCTC 2665 / VKM Ac-2230) (Micrococcus lysodeikticus), this protein is Polyribonucleotide nucleotidyltransferase.